We begin with the raw amino-acid sequence, 380 residues long: DNA replication and repair protein RecF (380 aa).

ATP is bound at residue 30-37; it reads GPNGFGKT.

It belongs to the RecF family.

The protein localises to the cytoplasm. The RecF protein is involved in DNA metabolism; it is required for DNA replication and normal SOS inducibility. RecF binds preferentially to single-stranded, linear DNA. It also seems to bind ATP. The protein is DNA replication and repair protein RecF of Mycobacterium sp. (strain JLS).